The primary structure comprises 635 residues: Threonine--tRNA ligase (635 aa).

One can recognise a TGS domain in the interval 1–61; it reads MVSIRLPDGS…DHDVALAIVT (61 aa). The tract at residues 242-533 is catalytic; the sequence is DHRKLGKQLD…LIEHHAGAMP (292 aa). The Zn(2+) site is built by Cys333, His384, and His510.

This sequence belongs to the class-II aminoacyl-tRNA synthetase family. As to quaternary structure, homodimer. Zn(2+) is required as a cofactor.

The protein localises to the cytoplasm. It catalyses the reaction tRNA(Thr) + L-threonine + ATP = L-threonyl-tRNA(Thr) + AMP + diphosphate + H(+). Catalyzes the attachment of threonine to tRNA(Thr) in a two-step reaction: L-threonine is first activated by ATP to form Thr-AMP and then transferred to the acceptor end of tRNA(Thr). Also edits incorrectly charged L-seryl-tRNA(Thr). The chain is Threonine--tRNA ligase from Paraburkholderia xenovorans (strain LB400).